The following is a 384-amino-acid chain: 4-hydroxy-3-methylbut-2-en-1-yl diphosphate synthase (flavodoxin) 1 (384 aa).

[4Fe-4S] cluster contacts are provided by Cys-281, Cys-284, Cys-316, and Glu-323.

The protein belongs to the IspG family. [4Fe-4S] cluster is required as a cofactor.

The enzyme catalyses (2E)-4-hydroxy-3-methylbut-2-enyl diphosphate + oxidized [flavodoxin] + H2O + 2 H(+) = 2-C-methyl-D-erythritol 2,4-cyclic diphosphate + reduced [flavodoxin]. It participates in isoprenoid biosynthesis; isopentenyl diphosphate biosynthesis via DXP pathway; isopentenyl diphosphate from 1-deoxy-D-xylulose 5-phosphate: step 5/6. Its function is as follows. Converts 2C-methyl-D-erythritol 2,4-cyclodiphosphate (ME-2,4cPP) into 1-hydroxy-2-methyl-2-(E)-butenyl 4-diphosphate. This is 4-hydroxy-3-methylbut-2-en-1-yl diphosphate synthase (flavodoxin) 1 from Streptomyces coelicolor (strain ATCC BAA-471 / A3(2) / M145).